Consider the following 84-residue polypeptide: Toxin To10 (84 aa).

Positions 1–19 (MNYSTLIAVASLLTAGTES) are cleaved as a signal peptide. One can recognise an LCN-type CS-alpha/beta domain in the interval 21–80 (KDGYPVEGSCAFPCGYDNAYCDKLCKERKADSGYCYWVNILCYCYGLPDNAAIKGYGRCK). Cystine bridges form between C30–C79, C34–C55, C41–C62, and C45–C64. Residue P81 is modified to Proline amide.

Belongs to the long (4 C-C) scorpion toxin superfamily. Sodium channel inhibitor family. Alpha subfamily. As to expression, expressed by the venom gland.

It localises to the secreted. Its function is as follows. Alpha toxins bind voltage-independently at site-3 of sodium channels (Nav) and inhibit the inactivation of the activated channels, thereby blocking neuronal transmission. The polypeptide is Toxin To10 (Tityus obscurus (Amazonian scorpion)).